The sequence spans 311 residues: Zeta-sarcoglycan (311 aa).

Over 1-50 (MDRSTDLDIQELKMTREQYILATQQNNLPRPENAQLYPVGIYGWRKRCLY) the chain is Cytoplasmic. The helical; Signal-anchor for type II membrane protein transmembrane segment at 51-71 (FFVLLLLVTMIVNLAMTIWIL) threads the bilayer. The Extracellular portion of the chain corresponds to 72-311 (KVMNFTVDGM…QSSSSICLWN (240 aa)). Asn75 and Asn123 each carry an N-linked (GlcNAc...) asparagine glycan. Cys285 and Cys301 form a disulfide bridge.

The protein belongs to the sarcoglycan beta/delta/gamma/zeta family. As to expression, expressed in the heart, skeletal muscle and arterial vascular smooth muscle.

It localises to the cell membrane. It is found in the sarcolemma. The protein localises to the cytoplasm. The protein resides in the cytoskeleton. Its function is as follows. Component of the sarcoglycan complex, a subcomplex of the dystrophin-glycoprotein complex which forms a link between the F-actin cytoskeleton and the extracellular matrix. May play a role in the maintenance of striated muscle membrane stability. This is Zeta-sarcoglycan (Sgcz) from Mus musculus (Mouse).